The primary structure comprises 286 residues: CLA biosynthesis dehydrogenase/reductase (286 aa).

Residues aspartate 37, aspartate 63, valine 64, asparagine 90, tyrosine 156, and lysine 160 each contribute to the NAD(+) site. Catalysis depends on tyrosine 156, which acts as the Proton acceptor.

This sequence belongs to the short-chain dehydrogenases/reductases (SDR) family.

Its subcellular location is the cytoplasm. It carries out the reaction (10S)-hydroxy-(12Z)-octadecenoate + NAD(+) = 10-oxo-(12Z)-octadecenoate + NADH + H(+). The enzyme catalyses 10-oxo-(11E)-octadecenoate + NADH + H(+) = 10-hydroxy-(11E)-octadecenoate + NAD(+). It catalyses the reaction 10-oxooctadecanoate + NADH + H(+) = 10-hydroxyoctadecanoate + NAD(+). It participates in lipid metabolism; fatty acid metabolism. Its function is as follows. Is involved in a saturation metabolic pathway of polyunsaturated fatty acids, that detoxifies unsaturated fatty acids and generates hydroxy fatty acids, oxo fatty acids, conjugated fatty acids such as conjugated linoleic acids (CLAs), and partially saturated trans-fatty acids as intermediates. CLA-DH catalyzes the dehydrogenation/reduction steps in the production of 10-oxo-(12Z)-octadecenoate, 10-hydroxy-(11E)-octadecenoate and 10-hydroxyoctadecanoate during linoleate metabolism. As part of the gut microbiome, this enzyme modifies host fatty acid composition and is expected to improve human health by altering lipid metabolism related to the onset of metabolic syndrome. In Lactiplantibacillus plantarum (Lactobacillus plantarum), this protein is CLA biosynthesis dehydrogenase/reductase.